The sequence spans 321 residues: Malate dehydrogenase (321 aa).

NAD(+) contacts are provided by residues 10–15 and Asp34; that span reads GAGQIG. Residues Arg83 and Arg89 each contribute to the substrate site. Residues Asn96 and 119–121 each bind NAD(+); that span reads VTN. Asn121 and Arg152 together coordinate substrate. Catalysis depends on His176, which acts as the Proton acceptor.

This sequence belongs to the LDH/MDH superfamily. MDH type 3 family.

The catalysed reaction is (S)-malate + NAD(+) = oxaloacetate + NADH + H(+). In terms of biological role, catalyzes the reversible oxidation of malate to oxaloacetate. The polypeptide is Malate dehydrogenase (Azorhizobium caulinodans (strain ATCC 43989 / DSM 5975 / JCM 20966 / LMG 6465 / NBRC 14845 / NCIMB 13405 / ORS 571)).